A 487-amino-acid chain; its full sequence is Glutamyl-tRNA(Gln) amidotransferase subunit A (487 aa).

Catalysis depends on charge relay system residues K74 and S149. The active-site Acyl-ester intermediate is S173.

This sequence belongs to the amidase family. GatA subfamily. As to quaternary structure, heterotrimer of A, B and C subunits.

It catalyses the reaction L-glutamyl-tRNA(Gln) + L-glutamine + ATP + H2O = L-glutaminyl-tRNA(Gln) + L-glutamate + ADP + phosphate + H(+). Its function is as follows. Allows the formation of correctly charged Gln-tRNA(Gln) through the transamidation of misacylated Glu-tRNA(Gln) in organisms which lack glutaminyl-tRNA synthetase. The reaction takes place in the presence of glutamine and ATP through an activated gamma-phospho-Glu-tRNA(Gln). In Prochlorococcus marinus (strain MIT 9211), this protein is Glutamyl-tRNA(Gln) amidotransferase subunit A.